A 184-amino-acid chain; its full sequence is Flagellar transcriptional regulator FlhC (184 aa).

Residues C144, C147, C163, and C166 each contribute to the Zn(2+) site.

This sequence belongs to the FlhC family. Heterohexamer composed of two FlhC and four FlhD subunits. Each FlhC binds a FlhD dimer, forming a heterotrimer, and a hexamer assembles by dimerization of two heterotrimers. Zn(2+) is required as a cofactor.

Its subcellular location is the cytoplasm. Functionally, functions in complex with FlhD as a master transcriptional regulator that regulates transcription of several flagellar and non-flagellar operons by binding to their promoter region. Activates expression of class 2 flagellar genes, including fliA, which is a flagellum-specific sigma factor that turns on the class 3 genes. Also regulates genes whose products function in a variety of physiological pathways. This Verminephrobacter eiseniae (strain EF01-2) protein is Flagellar transcriptional regulator FlhC.